Here is a 266-residue protein sequence, read N- to C-terminus: Metallo-beta-lactamase domain-containing protein 1 (266 aa).

Residues 48–71 (LPQTRGPASSHRESPRGSGGAEAA) form a disordered region. 7 residues coordinate Zn(2+): His114, His116, Asp118, His119, His169, Asp192, and His231. Positions 229 to 266 (PGHGPPFRVLREASQPETEGGGNSQQEPVVGDEEPALH) are disordered.

This sequence belongs to the metallo-beta-lactamase superfamily. Glyoxalase II family. In terms of assembly, homodimer. Zn(2+) is required as a cofactor.

Its subcellular location is the cytoplasm. The protein resides in the cytosol. The protein localises to the nucleus. The catalysed reaction is a ribonucleotidyl-ribonucleotide-RNA + H2O = a 3'-end ribonucleotide-RNA + a 5'-end 5'-phospho-ribonucleoside-RNA + H(+). Endoribonuclease that catalyzes the hydrolysis of histone-coding pre-mRNA 3'-end. Involved in histone pre-mRNA processing during the S-phase of the cell cycle, which is required for entering/progressing through S-phase. Cleaves histone pre-mRNA at a major and a minor cleavage site after the 5'-ACCCA-3' and the 5'-ACCCACA-3' sequence, respectively, and located downstream of the stem-loop. May require the presence of the HDE element located at the histone pre-RNA 3'-end to avoid non-specific cleavage. The chain is Metallo-beta-lactamase domain-containing protein 1 from Homo sapiens (Human).